An 881-amino-acid chain; its full sequence is MKKQFNRMKQLANQTVGRAEKTEVLSEDLLQIERRLDTVRSICHHSHKRLVACFQGQHGTDAERRHKKLPLTALAQNMQEASTQLEDSLLGKMLETCGDAENQLALELSQHEVFVEKEIVDPLYGIAEVEIPNIQKQRKQLARLVLDWDSVRARWNQAHKSSGTNFQGLPSKIDTLKEEMDEAGNKVEQCKDQLAADMYNFMAKEGEYGKFFVTLLEAQADYHRKALAVLEKTLPEMRAHQDKWAEKPAFGTPLEEHLKRSGREIALPIEACVMLLLETGMKEEGLFRIGAGASKLKKLKAALDCSTSHLDEFYSDPHAVAGALKSYLRELPEPLMTFNLYEEWTQVASVQDQDKKLQDLWRTCQKLPPQNFVNFRYLIKFLAKLAQTSDVNKMTPSNIAIVLGPNLLWARNEGTLAEMAAATSVHVVAVIEPIIQHADWFFPEEVEFNVSEAFVPLTTPSSNHSFHTGNDSDSGTLERKRPASMAVMEGDLVKKESFGVKLMDFQAHRRGGTLNRKHISPAFQPPLPPTDGSTVVPAGPEPPPQSSRAESSSGGGTVPSSAGILEQGPSPGDGSPPKPKDPVSAAVPAPGRNNSQIASGQNQPQAAAGSHQLSMGQPHNAAGPSPHTLRRAVKKPAPAPPKPGNPPPGHPGGQSSSGTSQHPPSLSPKPPTRSPSPPTQHTGQPPGQPSAPSQLSAPRRYSSSLSPIQAPNHPPPQPPTQATPLMHTKPNSQGPPNPMALPSEHGLEQPSHTPPQTPTPPSTPPLGKQNPSLPAPQTLAGGNPETAQPHAGTLPRPRPVPKPRNRPSVPPPPQPPGVHSAGDSSLTNTAPTASKIVTDSNSRVSEPHRSIFPEMHSDSASKDVPGRILLDIDNDTESTAL.

Positions 14-246 (QTVGRAEKTE…MRAHQDKWAE (233 aa)) constitute a BAR domain. The 191-residue stretch at 252-442 (TPLEEHLKRS…PIIQHADWFF (191 aa)) folds into the Rho-GAP domain. Over residues 459-475 (TPSSNHSFHTGNDSDSG) the composition is skewed to polar residues. A disordered region spans residues 459 to 482 (TPSSNHSFHTGNDSDSGTLERKRP). Phosphoserine is present on residues serine 484 and serine 575. The tract at residues 511–881 (GGTLNRKHIS…IDNDTESTAL (371 aa)) is disordered. Positions 592 to 617 (RNNSQIASGQNQPQAAAGSHQLSMGQ) are enriched in polar residues. Over residues 637–650 (APAPPKPGNPPPGH) the composition is skewed to pro residues. The span at 653–664 (GQSSSGTSQHPP) shows a compositional bias: low complexity. A compositionally biased stretch (pro residues) spans 665–678 (SLSPKPPTRSPSPP). Phosphothreonine occurs at positions 679 and 682. The segment covering 679-698 (TQHTGQPPGQPSAPSQLSAP) has biased composition (low complexity). Residues serine 702 and serine 704 each carry the phosphoserine modification. 3 stretches are compositionally biased toward pro residues: residues 712 to 721 (NHPPPQPPTQ), 752 to 764 (HTPP…PSTP), and 806 to 816 (RPSVPPPPQPP). Threonine 753, threonine 757, and threonine 759 each carry phosphothreonine. The short motif at 753 to 766 (TPPQTPTPPSTPPL) is the SH3-binding element. A Phosphoserine modification is found at serine 762. Threonine 763 carries the phosphothreonine modification. Over residues 822-844 (GDSSLTNTAPTASKIVTDSNSRV) the composition is skewed to polar residues. Residues 845 to 865 (SEPHRSIFPEMHSDSASKDVP) show a composition bias toward basic and acidic residues. Residues 872 to 881 (IDNDTESTAL) are compositionally biased toward acidic residues.

As to quaternary structure, component of a complex whose core is composed of ARHGAP17, AMOT, PALS1, PATJ and PARD3/PAR3. Interacts with NHERF1, FNBP1, TRIP10, CAPZA (CAPZA1, CAPZA2 or CAPZA3), CAPZB, CD2AP and SH3KBP1/CIN85. Ubiquitously expressed. Expressed at higher level in heart and placenta.

It localises to the membrane. The protein resides in the cytoplasm. Its subcellular location is the cell junction. The protein localises to the tight junction. Functionally, rho GTPase-activating protein involved in the maintenance of tight junction by regulating the activity of CDC42, thereby playing a central role in apical polarity of epithelial cells. Specifically acts as a GTPase activator for the CDC42 GTPase by converting it to an inactive GDP-bound state. The complex formed with AMOT acts by regulating the uptake of polarity proteins at tight junctions, possibly by deciding whether tight junction transmembrane proteins are recycled back to the plasma membrane or sent elsewhere. Participates in the Ca(2+)-dependent regulation of exocytosis, possibly by catalyzing GTPase activity of Rho family proteins and by inducing the reorganization of the cortical actin filaments. Acts as a GTPase activator in vitro for RAC1. In Homo sapiens (Human), this protein is Rho GTPase-activating protein 17 (ARHGAP17).